The sequence spans 239 residues: uncharacterized protein (239 aa).

This is an uncharacterized protein from Edwardsiella ictaluri (strain 93-146).